The sequence spans 344 residues: Sorting nexin-16 (344 aa).

The segment covering 1–10 (MATPYVPVPM) has biased composition (pro residues). Disordered stretches follow at residues 1-49 (MATP…DSSV) and 83-105 (SIEY…NWED). Residues 14–26 (NSASSFTNNRNQR) show a composition bias toward polar residues. Positions 27–40 (SSSFGSVSTSSNSS) are enriched in low complexity. Basic and acidic residues predominate over residues 88 to 105 (ARPRDTEEQHPDALNWED). Residues 105–218 (DRPSTPTILG…EFLCLDDPPG (114 aa)) enclose the PX domain. Arg-144, Thr-146, and Arg-184 together coordinate a 1,2-diacyl-sn-glycero-3-phospho-(1D-myo-inositol-3-phosphate). Ser-222 is modified (phosphoserine). A coiled-coil region spans residues 223–278 (LEESRAFCETLEETNYHLQRELLEKQKEVESLKKLLGEKQLHIDALETRIRTLSLE).

The protein belongs to the sorting nexin family. As to quaternary structure, homooligomer. Interacts with EGFR.

It localises to the early endosome membrane. The protein localises to the late endosome membrane. It is found in the cytoplasm. Its subcellular location is the lysosome. In terms of biological role, may be involved in several stages of intracellular trafficking. Plays a role in protein transport from early to late endosomes. Plays a role in protein transport to the lysosome. Promotes degradation of EGFR after EGF signaling. The chain is Sorting nexin-16 (Snx16) from Rattus norvegicus (Rat).